Here is a 503-residue protein sequence, read N- to C-terminus: ATP synthase subunit alpha (503 aa).

Residue 170-177 participates in ATP binding; the sequence is GDRKTGKT.

Belongs to the ATPase alpha/beta chains family. F-type ATPases have 2 components, CF(1) - the catalytic core - and CF(0) - the membrane proton channel. CF(1) has five subunits: alpha(3), beta(3), gamma(1), delta(1), epsilon(1). CF(0) has four main subunits: a(1), b(1), b'(1) and c(9-12).

It is found in the cellular thylakoid membrane. It carries out the reaction ATP + H2O + 4 H(+)(in) = ADP + phosphate + 5 H(+)(out). Its function is as follows. Produces ATP from ADP in the presence of a proton gradient across the membrane. The alpha chain is a regulatory subunit. This Synechocystis sp. (strain ATCC 27184 / PCC 6803 / Kazusa) protein is ATP synthase subunit alpha.